A 394-amino-acid chain; its full sequence is Magnesium transporter MRS2-2 (394 aa).

The segment at 115–145 (PVGNASHNGGQGDGKEIAGAQNDGDTGDEDE) is disordered. 2 helical membrane-spanning segments follow: residues 329–349 (LVLS…GIFG) and 366–386 (YVVG…MSYA). Positions 349–351 (GMN) match the Required for magnesium transport activity motif.

Belongs to the CorA metal ion transporter (MIT) (TC 1.A.35.5) family. Expressed in the whole plant but preferentially in the mature anthers.

The protein localises to the membrane. In terms of biological role, low-affinity magnesium transporter that mediates the influx of magnesium. Plays a crucial role in male gametophyte development and male fertility. This is Magnesium transporter MRS2-2 (MRS2-2) from Arabidopsis thaliana (Mouse-ear cress).